The chain runs to 88 residues: Small ribosomal subunit protein bS18 (88 aa).

The disordered stretch occupies residues 1–26; the sequence is MAFAQSGGAGGGGGQRRPFFRRRKTC.

Belongs to the bacterial ribosomal protein bS18 family. As to quaternary structure, part of the 30S ribosomal subunit. Forms a tight heterodimer with protein bS6.

Its function is as follows. Binds as a heterodimer with protein bS6 to the central domain of the 16S rRNA, where it helps stabilize the platform of the 30S subunit. In Xanthobacter autotrophicus (strain ATCC BAA-1158 / Py2), this protein is Small ribosomal subunit protein bS18.